The sequence spans 393 residues: S-adenosylmethionine synthase 2 (393 aa).

Position 9 (glutamate 9) interacts with Mg(2+). Histidine 15 contributes to the ATP binding site. Glutamate 43 is a K(+) binding site. Glutamate 56 and glutamine 99 together coordinate L-methionine. Residues 167-169 (DGK), 235-238 (SGRF), aspartate 246, 252-253 (RK), alanine 269, lysine 273, and lysine 277 contribute to the ATP site. Position 246 (aspartate 246) interacts with L-methionine. Lysine 277 contributes to the L-methionine binding site.

It belongs to the AdoMet synthase family. As to quaternary structure, homotetramer. Mn(2+) is required as a cofactor. The cofactor is Mg(2+). Co(2+) serves as cofactor. Requires K(+) as cofactor. In terms of tissue distribution, roots and shoots.

It is found in the cytoplasm. The enzyme catalyses L-methionine + ATP + H2O = S-adenosyl-L-methionine + phosphate + diphosphate. The protein operates within amino-acid biosynthesis; S-adenosyl-L-methionine biosynthesis; S-adenosyl-L-methionine from L-methionine: step 1/1. Its function is as follows. Catalyzes the formation of S-adenosylmethionine from methionine and ATP. The reaction comprises two steps that are both catalyzed by the same enzyme: formation of S-adenosylmethionine (AdoMet) and triphosphate, and subsequent hydrolysis of the triphosphate. The sequence is that of S-adenosylmethionine synthase 2 (SAMS2) from Pinus contorta (Shore pine).